The sequence spans 354 residues: Guanine nucleotide-binding protein G(i) subunit alpha (354 aa).

Glycine 2 carries the N-myristoyl glycine lipid modification. Cysteine 3 is lipidated: S-palmitoyl cysteine. In terms of domain architecture, G-alpha spans 32 to 354 (REVKLLLLGA…KNNLKDCGLF (323 aa)). The G1 motif stretch occupies residues 35-48 (KLLLLGAGESGKST). Residues 40–47 (GAGESGKS), 175–181 (LRTRVKT), 200–204 (DVGGQ), 269–272 (NKKD), and alanine 326 contribute to the GTP site. The Mg(2+) site is built by serine 47 and threonine 181. Positions 173–181 (DVLRTRVKT) are G2 motif. The tract at residues 196 to 205 (FKMFDVGGQR) is G3 motif. The interval 265–272 (ILFLNKKD) is G4 motif. Residues 324–329 (TCATDT) form a G5 motif region.

Belongs to the G-alpha family. G(i/o/t/z) subfamily. As to quaternary structure, g proteins are composed of 3 units; alpha, beta and gamma. The alpha chain contains the guanine nucleotide binding site.

Guanine nucleotide-binding proteins (G proteins) are involved as modulators or transducers in various transmembrane signaling systems. This chain is Guanine nucleotide-binding protein G(i) subunit alpha, found in Planorbella trivolvis (Marsh rams-horn).